Consider the following 817-residue polypeptide: DNA-directed RNA polymerase subunit beta'' (817 aa).

4 residues coordinate Zn(2+): Cys219, Cys291, Cys298, and Cys301.

The protein belongs to the RNA polymerase beta' chain family. RpoC2 subfamily. In terms of assembly, in plastids the minimal PEP RNA polymerase catalytic core is composed of four subunits: alpha, beta, beta', and beta''. When a (nuclear-encoded) sigma factor is associated with the core the holoenzyme is formed, which can initiate transcription. It depends on Zn(2+) as a cofactor.

The protein resides in the plastid. It carries out the reaction RNA(n) + a ribonucleoside 5'-triphosphate = RNA(n+1) + diphosphate. DNA-dependent RNA polymerase catalyzes the transcription of DNA into RNA using the four ribonucleoside triphosphates as substrates. In Euglena longa (Euglenophycean alga), this protein is DNA-directed RNA polymerase subunit beta'' (rpoC2).